Consider the following 327-residue polypeptide: GTPase Obg (327 aa).

Positions 2-160 (HLFKDSLNLI…LNLRLELSLI (159 aa)) constitute an Obg domain. Positions 161–326 (ADIGLVGLPN…LVSEFFSLVK (166 aa)) constitute an OBG-type G domain. Residues 167 to 174 (GLPNAGKS), 192 to 196 (FTTKI), 213 to 216 (DLPG), 280 to 283 (SKLD), and 307 to 309 (SIY) contribute to the GTP site. Serine 174 and threonine 194 together coordinate Mg(2+).

Belongs to the TRAFAC class OBG-HflX-like GTPase superfamily. OBG GTPase family. Monomer. The cofactor is Mg(2+).

Its subcellular location is the cytoplasm. In terms of biological role, an essential GTPase which binds GTP, GDP and possibly (p)ppGpp with moderate affinity, with high nucleotide exchange rates and a fairly low GTP hydrolysis rate. Plays a role in control of the cell cycle, stress response, ribosome biogenesis and in those bacteria that undergo differentiation, in morphogenesis control. This Borrelia duttonii (strain Ly) protein is GTPase Obg.